The sequence spans 274 residues: 2,3,4,5-tetrahydropyridine-2,6-dicarboxylate N-succinyltransferase (274 aa).

Residues Arg107 and Asp144 each coordinate substrate.

Belongs to the transferase hexapeptide repeat family. In terms of assembly, homotrimer.

It is found in the cytoplasm. The catalysed reaction is (S)-2,3,4,5-tetrahydrodipicolinate + succinyl-CoA + H2O = (S)-2-succinylamino-6-oxoheptanedioate + CoA. It functions in the pathway amino-acid biosynthesis; L-lysine biosynthesis via DAP pathway; LL-2,6-diaminopimelate from (S)-tetrahydrodipicolinate (succinylase route): step 1/3. The chain is 2,3,4,5-tetrahydropyridine-2,6-dicarboxylate N-succinyltransferase from Cereibacter sphaeroides (strain ATCC 17029 / ATH 2.4.9) (Rhodobacter sphaeroides).